A 466-amino-acid polypeptide reads, in one-letter code: Argininosuccinate lyase (466 aa).

This sequence belongs to the lyase 1 family. Argininosuccinate lyase subfamily.

Its subcellular location is the cytoplasm. It catalyses the reaction 2-(N(omega)-L-arginino)succinate = fumarate + L-arginine. The protein operates within amino-acid biosynthesis; L-arginine biosynthesis; L-arginine from L-ornithine and carbamoyl phosphate: step 3/3. The protein is Argininosuccinate lyase of Clostridium perfringens (strain ATCC 13124 / DSM 756 / JCM 1290 / NCIMB 6125 / NCTC 8237 / Type A).